We begin with the raw amino-acid sequence, 268 residues long: Zinc transporter ZupT (268 aa).

Transmembrane regions (helical) follow at residues I5 to I25, T38 to V58, A72 to D92, M124 to F144, T152 to V172, F187 to L207, L211 to I231, and L248 to L268. N136 and E139 together coordinate Fe(2+). E139 and H164 together coordinate Zn(2+). The Fe(2+) site is built by N165, E168, and E197. Zn(2+) is bound at residue E168.

It belongs to the ZIP transporter (TC 2.A.5) family. ZupT subfamily.

It is found in the cell inner membrane. The catalysed reaction is Zn(2+)(in) = Zn(2+)(out). In terms of biological role, mediates zinc uptake. May also transport other divalent cations. The polypeptide is Zinc transporter ZupT (Chlorobaculum parvum (strain DSM 263 / NCIMB 8327) (Chlorobium vibrioforme subsp. thiosulfatophilum)).